Reading from the N-terminus, the 118-residue chain is Small ribosomal subunit protein uS13 (118 aa).

Residues G94–K118 form a disordered region.

It belongs to the universal ribosomal protein uS13 family. As to quaternary structure, part of the 30S ribosomal subunit. Forms a loose heterodimer with protein S19. Forms two bridges to the 50S subunit in the 70S ribosome.

In terms of biological role, located at the top of the head of the 30S subunit, it contacts several helices of the 16S rRNA. In the 70S ribosome it contacts the 23S rRNA (bridge B1a) and protein L5 of the 50S subunit (bridge B1b), connecting the 2 subunits; these bridges are implicated in subunit movement. Contacts the tRNAs in the A and P-sites. In Tolumonas auensis (strain DSM 9187 / NBRC 110442 / TA 4), this protein is Small ribosomal subunit protein uS13.